The sequence spans 196 residues: NADH-quinone oxidoreductase subunit B (196 aa).

The [4Fe-4S] cluster site is built by Cys-63, Cys-64, Cys-129, and Cys-159.

The protein belongs to the complex I 20 kDa subunit family. In terms of assembly, NDH-1 is composed of 14 different subunits. Subunits NuoB, C, D, E, F, and G constitute the peripheral sector of the complex. It depends on [4Fe-4S] cluster as a cofactor.

Its subcellular location is the cell inner membrane. It catalyses the reaction a quinone + NADH + 5 H(+)(in) = a quinol + NAD(+) + 4 H(+)(out). Functionally, NDH-1 shuttles electrons from NADH, via FMN and iron-sulfur (Fe-S) centers, to quinones in the respiratory chain. The immediate electron acceptor for the enzyme in this species is believed to be a menaquinone. Couples the redox reaction to proton translocation (for every two electrons transferred, four hydrogen ions are translocated across the cytoplasmic membrane), and thus conserves the redox energy in a proton gradient. The sequence is that of NADH-quinone oxidoreductase subunit B from Bacteroides fragilis (strain ATCC 25285 / DSM 2151 / CCUG 4856 / JCM 11019 / LMG 10263 / NCTC 9343 / Onslow / VPI 2553 / EN-2).